The following is a 277-amino-acid chain: Large ribosomal subunit protein uL2 (277 aa).

The disordered stretch occupies residues 223–277 (VTMNPVDHPHGGGEGRTSGGRHPVTPWGKPTKGMKTRSNKATDKFIVTSRHKRKK).

This sequence belongs to the universal ribosomal protein uL2 family. Part of the 50S ribosomal subunit. Forms a bridge to the 30S subunit in the 70S ribosome.

Its function is as follows. One of the primary rRNA binding proteins. Required for association of the 30S and 50S subunits to form the 70S ribosome, for tRNA binding and peptide bond formation. It has been suggested to have peptidyltransferase activity; this is somewhat controversial. Makes several contacts with the 16S rRNA in the 70S ribosome. The protein is Large ribosomal subunit protein uL2 of Azorhizobium caulinodans (strain ATCC 43989 / DSM 5975 / JCM 20966 / LMG 6465 / NBRC 14845 / NCIMB 13405 / ORS 571).